The sequence spans 467 residues: tRNA dimethylallyltransferase (467 aa).

A mitochondrion-targeting transit peptide spans 1–47 (MAAAAAARAVPVSSGFRGLRRTLPLVVILGATGTGKSTLALQLGQRL). 32-37 (TGTGKS) contacts dimethylallyl diphosphate. 2 interaction with substrate tRNA regions span residues 55-58 (DSMQ) and 183-187 (RKVAR). Positions 221-230 (FPNPCILWLH) are core aggregation region. The tract at residues 233 to 255 (QAVLDERLDKRVDDMLAAGLLEE) is interaction with isopentenylpyrophosphate transferase. Interaction with substrate tRNA stretches follow at residues 281 to 283 (QSI) and 313 to 331 (ALKQ…WVKN). The segment at 395–425 (HMCDLCDRIIIGDREWAAHLKSKSHLHQLKK) adopts a Matrin-type zinc-finger fold. A disordered region spans residues 432 to 467 (DAVSATGSQSNSPDCDPERIEGESSGQHNQELKASV). A phosphoserine mark is found at Ser443 and Ser455.

It belongs to the IPP transferase family.

The protein localises to the mitochondrion. Its subcellular location is the cytoplasm. The protein resides in the nucleus. It carries out the reaction adenosine(37) in tRNA + dimethylallyl diphosphate = N(6)-dimethylallyladenosine(37) in tRNA + diphosphate. In terms of biological role, catalyzes the transfer of a dimethylallyl group onto the adenine at position 37 of both cytosolic and mitochondrial tRNAs, leading to the formation of N6-(dimethylallyl)adenosine (i6A37). Mediates modification of a limited subset of tRNAs: tRNA(Ser)(AGA), tRNA(Ser)(CGA), tRNA(Ser)(UGA), as well as partial modification of the selenocysteine tRNA(Ser)(UCA). TRIT1 is therefore required for selenoprotein expression. The chain is tRNA dimethylallyltransferase (Trit1) from Mus musculus (Mouse).